A 321-amino-acid polypeptide reads, in one-letter code: Mitochondrial coenzyme A transporter SLC25A42 (321 aa).

Solcar repeat units follow at residues 33 to 119, 131 to 216, and 226 to 314; these read RSVL…YKGI, LPPV…LKKT, and PFPY…TQIL. The next 6 membrane-spanning stretches (helical) occupy residues 35–55, 91–111, 137–154, 191–208, 232–252, and 295–315; these read VLNS…AVAP, LWRG…IQFC, LLAG…TYPL, GFTP…LSFF, LVFG…LDVV, and VKGP…QILL.

The protein belongs to the mitochondrial carrier (TC 2.A.29) family.

Its subcellular location is the mitochondrion inner membrane. The catalysed reaction is ADP(out) + CoA(in) = ADP(in) + CoA(out). It catalyses the reaction 3'-dephospho-CoA(in) + ADP(out) = 3'-dephospho-CoA(out) + ADP(in). The enzyme catalyses adenosine 3',5'-bisphosphate(in) + ADP(out) = adenosine 3',5'-bisphosphate(out) + ADP(in). It carries out the reaction AMP(in) + ADP(out) = AMP(out) + ADP(in). The catalysed reaction is dADP(in) + ADP(out) = dADP(out) + ADP(in). It catalyses the reaction ADP(in) + ATP(out) = ADP(out) + ATP(in). In terms of biological role, mitochondrial carrier mediating the transport of coenzyme A (CoA) in mitochondria in exchange for intramitochondrial (deoxy)adenine nucleotides and adenosine 3',5'-diphosphate. The polypeptide is Mitochondrial coenzyme A transporter SLC25A42 (slc25a42) (Danio rerio (Zebrafish)).